A 119-amino-acid chain; its full sequence is MIVGIGIDIIELNRIEKMLDGKLKFMERILTENERNVAKGLKGSRLTEFVAGRFAAKEAYSKAVGTGIGKEVSFLDIEVRNDDRGKPILITSTEHIVHLSISHSKEFAVAQVVLESSSR.

Mg(2+) contacts are provided by aspartate 8 and glutamate 58.

Belongs to the P-Pant transferase superfamily. AcpS family. It depends on Mg(2+) as a cofactor.

It localises to the cytoplasm. The enzyme catalyses apo-[ACP] + CoA = holo-[ACP] + adenosine 3',5'-bisphosphate + H(+). Transfers the 4'-phosphopantetheine moiety from coenzyme A to a Ser of acyl-carrier-protein. This chain is Holo-[acyl-carrier-protein] synthase, found in Bacillus cereus (strain ZK / E33L).